Here is a 284-residue protein sequence, read N- to C-terminus: Bifunctional protein FolD (284 aa).

NADP(+) is bound by residues 165-167 (GAS), S190, and I231.

It belongs to the tetrahydrofolate dehydrogenase/cyclohydrolase family. As to quaternary structure, homodimer.

It catalyses the reaction (6R)-5,10-methylene-5,6,7,8-tetrahydrofolate + NADP(+) = (6R)-5,10-methenyltetrahydrofolate + NADPH. It carries out the reaction (6R)-5,10-methenyltetrahydrofolate + H2O = (6R)-10-formyltetrahydrofolate + H(+). It functions in the pathway one-carbon metabolism; tetrahydrofolate interconversion. In terms of biological role, catalyzes the oxidation of 5,10-methylenetetrahydrofolate to 5,10-methenyltetrahydrofolate and then the hydrolysis of 5,10-methenyltetrahydrofolate to 10-formyltetrahydrofolate. The protein is Bifunctional protein FolD of Polynucleobacter necessarius subsp. necessarius (strain STIR1).